Here is a 498-residue protein sequence, read N- to C-terminus: ATP synthase subunit beta, chloroplastic (498 aa).

172–179 (GGAGVGKT) is a binding site for ATP.

Belongs to the ATPase alpha/beta chains family. F-type ATPases have 2 components, CF(1) - the catalytic core - and CF(0) - the membrane proton channel. CF(1) has five subunits: alpha(3), beta(3), gamma(1), delta(1), epsilon(1). CF(0) has four main subunits: a(1), b(1), b'(1) and c(9-12).

It is found in the plastid. Its subcellular location is the chloroplast thylakoid membrane. It carries out the reaction ATP + H2O + 4 H(+)(in) = ADP + phosphate + 5 H(+)(out). Functionally, produces ATP from ADP in the presence of a proton gradient across the membrane. The catalytic sites are hosted primarily by the beta subunits. The chain is ATP synthase subunit beta, chloroplastic from Platanus occidentalis (Sycamore).